The primary structure comprises 458 residues: Estrogen-related receptor gamma (458 aa).

A Glycyl lysine isopeptide (Lys-Gly) (interchain with G-Cter in SUMO) cross-link involves residue Lys40. Residues 42-52 (EPSSPASLTDS) are compositionally biased toward polar residues. The tract at residues 42-85 (EPSSPASLTDSVNHHSPGGSSDASGSYSSTMNGHQNGLDSPPLY) is disordered. Ser45 bears the Phosphoserine mark. Residues 57 to 70 (SPGGSSDASGSYSS) show a composition bias toward low complexity. The nuclear receptor DNA-binding region spans 125–200 (KRLCLVCGDI…VGMLKEGVRL (76 aa)). 2 NR C4-type zinc fingers span residues 128–148 (CLVCGDIASGYHYGVASCEAC) and 164–188 (CPATNECEITKRRRKSCQACRFMKC). The NR LBD domain occupies 233 to 457 (PYNKIVSHLL…KLFLEMLEAK (225 aa)).

This sequence belongs to the nuclear hormone receptor family. NR3 subfamily. Homodimer. Binds TLE1, PNRC1 and PNRC2. Binds GRIP1. Interacts with NRIP1, NCOA1 and NCOR2. In terms of processing, acetylated by PCAF/KAT2 (in vitro). Post-translationally, sumoylation on Lys-40 is enhanced by phosphorylation at Ser-45 and represses transcriptional activity. Phosphorylation on Ser-45 enhances sumoylation on Lys-40 thus repressing transcriptional activity. As to expression, expressed in the heart, kidney, brain, lung, bone marrow, adrenal gland, trachea, spinal cord and thyroid gland.

It localises to the nucleus. Its function is as follows. Orphan receptor that acts as a transcription activator in the absence of bound ligand. Binds specifically to an estrogen response element and activates reporter genes controlled by estrogen response elements. Induces the expression of PERM1 in the skeletal muscle. This is Estrogen-related receptor gamma (ESRRG) from Homo sapiens (Human).